A 95-amino-acid polypeptide reads, in one-letter code: Small ribosomal subunit protein bS6 (95 aa).

The protein belongs to the bacterial ribosomal protein bS6 family.

In terms of biological role, binds together with bS18 to 16S ribosomal RNA. This chain is Small ribosomal subunit protein bS6, found in Caldanaerobacter subterraneus subsp. tengcongensis (strain DSM 15242 / JCM 11007 / NBRC 100824 / MB4) (Thermoanaerobacter tengcongensis).